The following is a 347-amino-acid chain: Quinolinate synthase (347 aa).

The iminosuccinate site is built by H47 and S68. C113 provides a ligand contact to [4Fe-4S] cluster. Residues 139 to 141 (YAN) and S156 contribute to the iminosuccinate site. Residue C200 coordinates [4Fe-4S] cluster. Iminosuccinate is bound by residues 226-228 (HPE) and T243. C297 is a [4Fe-4S] cluster binding site.

It belongs to the quinolinate synthase family. Type 1 subfamily. [4Fe-4S] cluster is required as a cofactor.

It is found in the cytoplasm. It carries out the reaction iminosuccinate + dihydroxyacetone phosphate = quinolinate + phosphate + 2 H2O + H(+). It functions in the pathway cofactor biosynthesis; NAD(+) biosynthesis; quinolinate from iminoaspartate: step 1/1. Its function is as follows. Catalyzes the condensation of iminoaspartate with dihydroxyacetone phosphate to form quinolinate. The chain is Quinolinate synthase from Shigella dysenteriae serotype 1 (strain Sd197).